An 881-amino-acid chain; its full sequence is Valine--tRNA ligase (881 aa).

The 'HIGH' region signature appears at 76-86; that stretch reads PTVSGSLHIGH. The tract at residues 493–526 is disordered; that stretch reads DSPILPDESQLPVDPSSQAPEGYTEDQRGKPGGF. Positions 608-612 match the 'KMSKS' region motif; it reads KMSKS. Residue lysine 611 participates in ATP binding.

Belongs to the class-I aminoacyl-tRNA synthetase family. ValS type 2 subfamily. Monomer.

It localises to the cytoplasm. The enzyme catalyses tRNA(Val) + L-valine + ATP = L-valyl-tRNA(Val) + AMP + diphosphate. Catalyzes the attachment of valine to tRNA(Val). As ValRS can inadvertently accommodate and process structurally similar amino acids such as threonine, to avoid such errors, it has a 'posttransfer' editing activity that hydrolyzes mischarged Thr-tRNA(Val) in a tRNA-dependent manner. The sequence is that of Valine--tRNA ligase from Thermobifida fusca (strain YX).